The primary structure comprises 493 residues: GPI alpha-1,6-mannosyltransferase 2 (493 aa).

Over 1 to 13 (MGLLDPSQKEVLR) the chain is Cytoplasmic. A helical transmembrane segment spans residues 14 to 34 (FAVNCRILTLVLQALFNLIIP). At 35-77 (DHHADAFCPPRLAPSGSADQLVEGLLGGLSRWDAEHFLFIAEH) the chain is on the lumenal side. A helical membrane pass occupies residues 78–98 (GYLYEHNFAFFPGFPLALLMG). Residues 99–113 (TELLRPLQGLLSQRS) lie on the Cytoplasmic side of the membrane. The helical transmembrane segment at 114–134 (CLLVSVALLNLLFSVLAAVAL) threads the bilayer. At 135 to 136 (HD) the chain is on the lumenal side. Residues 137-157 (LGCLVLHCPRQALCAALLFCI) form a helical membrane-spanning segment. Over 158 to 161 (SPAN) the chain is Cytoplasmic. Residues 162 to 182 (VFLAAGYSEALFAFLTFSAMG) form a helical membrane-spanning segment. Over 183–192 (QLERGRGWAS) the chain is Lumenal. Residues 193-213 (GLLFALAAGVRSNGLVSLGFL) traverse the membrane as a helical segment. At 214–234 (LHSQCRGFCSSLAVLSPWKPL) the chain is on the cytoplasmic side. A helical membrane pass occupies residues 235-255 (VKLMASVCLSVLIVSLPFALF). The Lumenal portion of the chain corresponds to 256 to 327 (QYRAYIQFCS…RYYELKQVPN (72 aa)). Residues 328 to 348 (FLLATPVTVLVVWATWTYVTT) form a helical membrane-spanning segment. The Cytoplasmic segment spans residues 349–378 (HPWLCLTLGLQRTKDRENPEKPHRGFLSPK). A helical transmembrane segment spans residues 379–399 (VFVYLVHAAALLVFGGLCMHV). Topologically, residues 400 to 469 (QVLTRFLASS…DWKRCSPVTR (70 aa)) are lumenal. A helical transmembrane segment spans residues 470 to 490 (CVLVYFLTYWLLGLILHCNFL). Residues 491–493 (PWT) lie on the Cytoplasmic side of the membrane.

This sequence belongs to the PIGV family. Not N-glycosylated.

The protein localises to the endoplasmic reticulum membrane. It functions in the pathway glycolipid biosynthesis; glycosylphosphatidylinositol-anchor biosynthesis. Its function is as follows. Alpha-1,6-mannosyltransferase that catalyzes the transfer of the second mannose, via an alpha-1,6 bond, from a dolichol-phosphate-mannose (Dol-P-Man) to the alpha-D-Man-(1-&gt;4)-alpha-D-GlcN-(1-&gt;6)-(1-radyl,2-acyl-sn-glycero-3-phospho)-2-acyl-inositol (also termed H2) intermediate to generate an alpha-D-Man-(1-&gt;6)-alpha-D-Man-(1-&gt;4)-alpha-D-GlcN-(1-&gt;6)-(1-radyl,2-acyl-sn-glycero-3-phospho)-2-acyl-inositol (also termed H3) and participates in the seventh step of the glycosylphosphatidylinositol-anchor biosynthesis. Also transfers the second mannose on a 2-PEtn-alpha-D-Man-(1-&gt;4)-alpha-D-GlcN-(1-&gt;6)-(1-radyl,2-acyl-sn-glycero-3-phospho)-2-acyl-inositol (also termed H5). The protein is GPI alpha-1,6-mannosyltransferase 2 of Mus musculus (Mouse).